Here is a 2617-residue protein sequence, read N- to C-terminus: Non-reducing polyketide synthase epaA (2617 aa).

An N-terminal acylcarrier protein transacylase domain (SAT) region spans residues Pro95 to Gln231. Residue Cys132 is the Nucleophile; for transacylase activity of the active site. The active-site Proton donor/acceptor; for transacylase activity is His250. Residues Pro372–Gln790 enclose the Ketosynthase family 3 (KS3) domain. Residues Cys539, His674, and His713 each act as for beta-ketoacyl synthase activity in the active site. A malonyl-CoA:ACP transacylase (MAT) domain region spans residues Phe902–Gly1193. The interval Pro1282–Asp1413 is N-terminal hotdog fold. One can recognise a PKS/mFAS DH domain in the interval Pro1282–Ser1591. The product template (PT) domain stretch occupies residues Leu1310–Ser1589. The active-site Proton acceptor; for dehydratase activity is the His1314. Positions Ala1443–Ser1591 are C-terminal hotdog fold. Asp1499 (proton donor; for dehydratase activity) is an active-site residue. The interval Thr1600–Ala1651 is disordered. A compositionally biased stretch (low complexity) spans Ala1602–Arg1619. In terms of domain architecture, Carrier spans Gln1653–Val1727. At Ser1687 the chain carries O-(pantetheine 4'-phosphoryl)serine. Residues Gly1728–Thr1799 form a disordered region. Residues Leu1750–Asp1766 are compositionally biased toward low complexity. Residues Leu1769–Thr1785 are compositionally biased toward polar residues. A methyltransferase domain region spans residues Asp1970 to Asp2158. An NADPH-binding (R) domain region spans residues Ile2240–Ala2485.

Pantetheine 4'-phosphate is required as a cofactor.

The protein operates within secondary metabolite biosynthesis. Non-reducing polyketide synthase; part of the gene cluster that mediates the biosynthesis of nigerpyrone and its derivatives carbonarone A and pestalamide A. The biosynthesis pathway begins with the polyketide assembly by epaA to form phenylacetyl triketide precursor from successive condensation of two malonyl-CoA, presumably with one phenylacetyl-CoA starter unit produced by the phenylacetyl-CoA ligase epaB. For the nigerpyrone biosynthesis, the reactive polyketide chain is released as an aldehyde through the R-domain. A nonenzymatic cyclization and dehydration may create nigerpyrone. For the biosynthesis of carbonarone A and pestalamide A, an extra methyl group is added through the C-methyltransferase domain. Several further steps involving the dehydrogenase orf1, the cytochrome P450 monooxygenase orf2 and the FAD-dependent monooxygenase orf3 are required to form a carbonarone A precursor which is converted to carbonarone A via cyclization. The O-acetyltransferase epaC could catalyze the transfer of 2-methylsuccinyl-CoA, a common intermediate in the ethylmalonyl-CoA pathway, to generate the final product pestalamide A. This Aspergillus niger (strain ATCC MYA-4892 / CBS 513.88 / FGSC A1513) protein is Non-reducing polyketide synthase epaA.